An 850-amino-acid polypeptide reads, in one-letter code: Translation initiation factor IF-2 (850 aa).

Disordered stretches follow at residues 50–72 and 92–267; these read LKSSHKSKAEEPRKITLQRKTTS and FVQR…TGPV. The segment covering 96–135 has biased composition (basic and acidic residues); sequence SPEEIQAEQKREQEERRAAENAAREKADADARQRNEEQAR. Residues 136-172 show a composition bias toward low complexity; it reads RQAAQAPAAAPVAKAEPAPAAAAPAAPAVPDAPVSED. Basic and acidic residues-rich tracts occupy residues 173–210 and 234–243; these read AAARAAERKKDEARRNESRTRDDDRRGGGVAGERRGEA and TTDEESDGFR. A compositionally biased stretch (basic residues) spans 244–257; sequence RGRGGKGKPKKRNQ. Residues 350–517 enclose the tr-type G domain; the sequence is SRAPVVTVMG…AVLLQAEILE (168 aa). A G1 region spans residues 359-366; the sequence is GHVDHGKT. 359 to 366 serves as a coordination point for GTP; it reads GHVDHGKT. The interval 384–388 is G2; the sequence is GITQH. Positions 405 to 408 are G3; it reads DTPG. GTP-binding positions include 405–409 and 459–462; these read DTPGH and NKID. A G4 region spans residues 459 to 462; sequence NKID. The G5 stretch occupies residues 495 to 497; the sequence is SAK.

Belongs to the TRAFAC class translation factor GTPase superfamily. Classic translation factor GTPase family. IF-2 subfamily.

It is found in the cytoplasm. One of the essential components for the initiation of protein synthesis. Protects formylmethionyl-tRNA from spontaneous hydrolysis and promotes its binding to the 30S ribosomal subunits. Also involved in the hydrolysis of GTP during the formation of the 70S ribosomal complex. The chain is Translation initiation factor IF-2 from Pseudomonas entomophila (strain L48).